The sequence spans 260 residues: Adenosylcobinamide-GDP ribazoletransferase (260 aa).

7 helical membrane passes run 42 to 62 (PLAG…ANAI), 64 to 84 (LPPL…TGAL), 117 to 137 (FAAL…MAII), 144 to 164 (YALL…LAFW), 192 to 212 (GLGL…VALI), 214 to 234 (ALVL…AKIG), and 240 to 260 (TLGA…VMAL).

The protein belongs to the CobS family. The cofactor is Mg(2+).

It localises to the cell inner membrane. The catalysed reaction is alpha-ribazole + adenosylcob(III)inamide-GDP = adenosylcob(III)alamin + GMP + H(+). It catalyses the reaction alpha-ribazole 5'-phosphate + adenosylcob(III)inamide-GDP = adenosylcob(III)alamin 5'-phosphate + GMP + H(+). It participates in cofactor biosynthesis; adenosylcobalamin biosynthesis; adenosylcobalamin from cob(II)yrinate a,c-diamide: step 7/7. In terms of biological role, joins adenosylcobinamide-GDP and alpha-ribazole to generate adenosylcobalamin (Ado-cobalamin). Also synthesizes adenosylcobalamin 5'-phosphate from adenosylcobinamide-GDP and alpha-ribazole 5'-phosphate. In Brucella abortus (strain S19), this protein is Adenosylcobinamide-GDP ribazoletransferase.